Reading from the N-terminus, the 103-residue chain is MYAVFQSGGKQHRVAPGHTVRLEKLEVATGSTVEFDQVLLIADGEKVHVGAPLVAGGKVVAEVVSHGRGEKVTIVKFRRRKHHDKKLGHRQWFTEVKITAINA.

This sequence belongs to the bacterial ribosomal protein bL21 family. In terms of assembly, part of the 50S ribosomal subunit. Contacts protein L20.

Functionally, this protein binds to 23S rRNA in the presence of protein L20. The sequence is that of Large ribosomal subunit protein bL21 from Shewanella sp. (strain ANA-3).